The sequence spans 103 residues: MKTLLLTLVVVTIICLDLGYTEMCNMCVRPYPFMSSCCPEGQDRCYKSYWVNENRKQEAYHGKYPVILERGCVTACTGPGSGSIYNLYTCCPTNRCGSSSTSG.

An N-terminal signal peptide occupies residues 1-21 (MKTLLLTLVVVTIICLDLGYT). Disulfide bonds link C24/C45, C27/C37, C38/C72, C76/C90, and C91/C96.

The protein belongs to the three-finger toxin family. Ancestral subfamily. Orphan group XVII sub-subfamily. Expressed by the venom gland.

Its subcellular location is the secreted. The polypeptide is Cytotoxin-like protein TA-BMBGT3 (Bungarus multicinctus (Many-banded krait)).